A 504-amino-acid polypeptide reads, in one-letter code: Anthocyanidin 3-O-glucoside 5-O-glucosyltransferase (504 aa).

Catalysis depends on His-23, which acts as the Proton acceptor. His-23 is an an anthocyanidin binding site. Residues 107–126 form a disordered region; it reads TKKGQGQGQGQGQGQGQGQG. The segment covering 111-125 has biased composition (gly residues); the sequence is QGQGQGQGQGQGQGQ. Residues Thr-157, Gln-377, His-392, Trp-395, Asn-396, Ser-397, Glu-400, Asp-416, and Gln-417 each contribute to the UDP-alpha-D-glucose site.

It belongs to the UDP-glycosyltransferase family. As to expression, predominantly expressed in petals and weakly in filaments. Not expressed in leaves, stems and other floral organs.

The catalysed reaction is an anthocyanidin 3-O-beta-D-glucoside + UDP-alpha-D-glucose = an anthocyanidin 3,5-di-O-beta-D-glucoside + UDP + 2 H(+). It participates in pigment biosynthesis; anthocyanin biosynthesis. Functionally, catalyzes the glucosylation at the O-5 position of anthocyanidin 3-glucosides to form anthocyanidin 3,5-di-O-glucosides using UDP-glucose as sugar donor. Anthocyanidin 3,5-di-O-glucosides are molecules that are responsible for pigmentation. Involved in biosynsthesis of accumulate gentiodelphin, a unique polyacylated delphinidin-type anthocyanin, in the petals. Also acts on anthocyanidin 3-O-(6-O-malonylglucoside). Much less active with hydroxycinnamoylglucose derivatives. No activity in the absence of the 3-O-glucoside group. The sequence is that of Anthocyanidin 3-O-glucoside 5-O-glucosyltransferase (5GT7) from Gentiana triflora (Clustered gentian).